The primary structure comprises 124 residues: Small ribosomal subunit protein uS12 (124 aa).

Asp89 carries the post-translational modification 3-methylthioaspartic acid.

The protein belongs to the universal ribosomal protein uS12 family. Part of the 30S ribosomal subunit. Contacts proteins S8 and S17. May interact with IF1 in the 30S initiation complex.

With S4 and S5 plays an important role in translational accuracy. Its function is as follows. Interacts with and stabilizes bases of the 16S rRNA that are involved in tRNA selection in the A site and with the mRNA backbone. Located at the interface of the 30S and 50S subunits, it traverses the body of the 30S subunit contacting proteins on the other side and probably holding the rRNA structure together. The combined cluster of proteins S8, S12 and S17 appears to hold together the shoulder and platform of the 30S subunit. The sequence is that of Small ribosomal subunit protein uS12 from Blochmanniella floridana.